The sequence spans 1588 residues: Multicopy suppressor of chk1 protein 1 (1588 aa).

The disordered stretch occupies residues 38-60 (HAKPSTQQQQQQQNISNETTSTG). Residues 51–60 (NISNETTSTG) show a composition bias toward polar residues. Residues 82 to 124 (NVRVTPKKEEFSRGLDFISDLYDQTARKSGAVRVIPPDNWKCP) form the JmjN domain. A PHD-type 1 zinc finger spans residues 298-345 (KCKLCAQEGSSLVTCCICQSNYHYACVEAPFAPFSDIHYWTCNSCIPS). Polar residues predominate over residues 385–395 (PLTLPSNTKTP). The segment at 385–412 (PLTLPSNTKTPPASARQSSRRTRSTSGK) is disordered. The 171-residue stretch at 475–645 (FPTSRQNAYY…DMHAENSFNM (171 aa)) folds into the JmjC domain. Positions 848–872 (EKRKPKRGSATHSHLESPSEEVEDL) are disordered. Residues 1171–1220 (FHYCFCRQPEAGMMIECELCHEWYHAKCMKMSKKKLRADEKFICPICDYR) form a PHD-type 2 zinc finger. Residues 1319–1341 (APQPPPFIGESRSNRKPRPTKRQ) form a disordered region. The segment at 1454-1505 (SVICLCRQPFAISDGTVQCHNCLEWFHYECVGLSSDIVSTLSNYACPDCCSK) adopts a PHD-type 3 zinc-finger fold.

It is found in the nucleus. Its function is as follows. Has a role in regulating chromatin structure via global deacetylation of histone H3. This function is associated with the activity of a histone deacetylase. The sequence is that of Multicopy suppressor of chk1 protein 1 (msc1) from Schizosaccharomyces pombe (strain 972 / ATCC 24843) (Fission yeast).